We begin with the raw amino-acid sequence, 453 residues long: Serine/threonine-protein phosphatase 2A 55 kDa regulatory subunit B delta isoform (453 aa).

WD repeat units follow at residues 32–71 (AEAD…KGRA), 97–138 (EIEE…KRAE), 181–219 (AHTY…RSFN), and 230–270 (ELTE…LCDR). The residue at position 285 (Ser285) is a Phosphoserine. WD repeat units lie at residues 289 to 327 (EIIS…RPVE), 344 to 385 (ENDC…DVTL), and 420 to 452 (DFNK…QDKI). At Tyr305 the chain carries Phosphotyrosine. Thr308 bears the Phosphothreonine mark.

Belongs to the phosphatase 2A regulatory subunit B family. PP2A consists of a common heterodimeric core enzyme, composed of a 36 kDa catalytic subunit (subunit C) and a 65 kDa constant regulatory subunit (PR65 or subunit A), that associates with a variety of regulatory subunits. Proteins that associate with the core dimer include three families of regulatory subunits B (the R2/B/PR55/B55, R3/B''/PR72/PR130/PR59 and R5/B'/B56 families), the 48 kDa variable regulatory subunit, viral proteins, and cell signaling molecules. Interacts with IER5.

Its subcellular location is the cytoplasm. In terms of biological role, substrate-recognition subunit of protein phosphatase 2A (PP2A) that plays a key role in cell cycle by controlling mitosis entry and exit. Involved in chromosome clustering during late mitosis by mediating dephosphorylation of MKI67. The activity of PP2A complexes containing PPP2R2D (PR55-delta) fluctuate during the cell cycle: the activity is high in interphase and low in mitosis. This Mus musculus (Mouse) protein is Serine/threonine-protein phosphatase 2A 55 kDa regulatory subunit B delta isoform.